A 208-amino-acid chain; its full sequence is Guanylate kinase (208 aa).

In terms of domain architecture, Guanylate kinase-like spans Gly-4–Gln-185. Residue Ala-11 to Ser-18 coordinates ATP.

Belongs to the guanylate kinase family.

The protein resides in the cytoplasm. It catalyses the reaction GMP + ATP = GDP + ADP. Essential for recycling GMP and indirectly, cGMP. This Haemophilus influenzae (strain 86-028NP) protein is Guanylate kinase.